The sequence spans 331 residues: Sideroflexin-5 (331 aa).

The next 4 membrane-spanning stretches (helical) occupy residues 104-126 (PFGW…LLFW), 153-175 (YIGA…TYFI), 243-265 (TTMV…MPYL), and 278-300 (HIFV…ALAL).

Belongs to the sideroflexin family.

Its subcellular location is the mitochondrion inner membrane. The enzyme catalyses citrate(in) = citrate(out). In terms of biological role, mitochondrial amino-acid transporter. The polypeptide is Sideroflexin-5 (Caenorhabditis elegans).